A 599-amino-acid chain; its full sequence is NADH-quinone oxidoreductase subunit C/D (599 aa).

An NADH dehydrogenase I subunit C region spans residues 1-189 (MTDLTTHDLA…DPFELTKQKE (189 aa)). The NADH dehydrogenase I subunit D stretch occupies residues 213 to 599 (DFMFLNLGPN…IDFVMSDVDR (387 aa)).

It in the N-terminal section; belongs to the complex I 30 kDa subunit family. In the C-terminal section; belongs to the complex I 49 kDa subunit family. In terms of assembly, NDH-1 is composed of 13 different subunits. Subunits NuoB, CD, E, F, and G constitute the peripheral sector of the complex.

It localises to the cell inner membrane. It catalyses the reaction a quinone + NADH + 5 H(+)(in) = a quinol + NAD(+) + 4 H(+)(out). Functionally, NDH-1 shuttles electrons from NADH, via FMN and iron-sulfur (Fe-S) centers, to quinones in the respiratory chain. The immediate electron acceptor for the enzyme in this species is believed to be ubiquinone. Couples the redox reaction to proton translocation (for every two electrons transferred, four hydrogen ions are translocated across the cytoplasmic membrane), and thus conserves the redox energy in a proton gradient. This Pectobacterium atrosepticum (strain SCRI 1043 / ATCC BAA-672) (Erwinia carotovora subsp. atroseptica) protein is NADH-quinone oxidoreductase subunit C/D.